The primary structure comprises 158 residues: MTDKDSNLGADQSEDVTVETTSVFRADFLNELDAPAAAGTEGAVSGVEGLPSGSALLVVKRGPNAGSRFLLDQPTTSAGRHPDSDIFLDDVTVSRRHAEFRLEGGEFQVVDVGSLNGTYVNREPVDSAVLANGDEVQIGKFRLVFLTGPKSDDSGSNA.

Thr-20 bears the Phosphothreonine; by PknG mark. Thr-21 is subject to Phosphothreonine; by PknB. One can recognise an FHA domain in the interval 76 to 125 (TSAGRHPDSDIFLDDVTVSRRHAEFRLEGGEFQVVDVGSLNGTYVNREPV).

Monomer. Binds via its FHA domain to Kgd, Gdh, and the N-terminal region of PknG. Post-translationally, phosphorylated on Thr-21 by PknB. Phosphorylated on Thr-20 by PknG. Phosphorylation at either Thr-20 or Thr-21 prevents binding to target enzymes.

In terms of biological role, involved in regulation of glutamate metabolism. Acts as a phosphorylation-dependent molecular switch that modulates the activities of Kgd and Gdh. This Mycolicibacterium smegmatis (strain ATCC 700084 / mc(2)155) (Mycobacterium smegmatis) protein is Glycogen accumulation regulator GarA (garA).